Consider the following 317-residue polypeptide: TPR repeat-containing thioredoxin TDX (317 aa).

The segment at 1–48 is disordered; the sequence is MATAGASSFEDEIMESDIELEGEAVEPDNDPPQKMGDPSVEVSDEKRD. The span at 9 to 29 shows a compositional bias: acidic residues; sequence FEDEIMESDIELEGEAVEPDN. TPR repeat units follow at residues 50–83, 85–117, and 119–151; these read AQLCKNKGVDAFSEGKLDEAIEHLTEAIVLNPTS, IAYATRAVIFVKSKKPNAAIRDADAALKINPDS, and KGYKSRGMAKAMLGKWEEAAQDLRMAAKLDYDE. The Thioredoxin domain maps to 189 to 316; the sequence is EKQRKHAEEV…LERKVAQHGS (128 aa). Catalysis depends on nucleophile residues C242 and C245. A disulfide bridge links C242 with C245.

It belongs to the thioredoxin family.

Its function is as follows. Probable thiol-disulfide oxidoreductase that may participate in various redox reactions and act as chaperone under heat shock. May interact with HSP70 proteins through the TPR repeats. This is TPR repeat-containing thioredoxin TDX from Oryza sativa subsp. japonica (Rice).